A 396-amino-acid polypeptide reads, in one-letter code: Elongation factor Tu (396 aa).

The region spanning 11–205 is the tr-type G domain; it reads KPHVNIGTIG…TVDEYIPTPE (195 aa). The segment at 20–27 is G1; it reads GHVDHGKT. Residue 20-27 coordinates GTP; sequence GHVDHGKT. Position 27 (Thr27) interacts with Mg(2+). The interval 61–65 is G2; that stretch reads GITIN. Residues 82–85 are G3; sequence DAPG. GTP contacts are provided by residues 82 to 86 and 137 to 140; these read DAPGH and NKCD. Residues 137–140 are G4; sequence NKCD. A G5 region spans residues 175 to 177; the sequence is SAL.

It belongs to the TRAFAC class translation factor GTPase superfamily. Classic translation factor GTPase family. EF-Tu/EF-1A subfamily. Monomer.

It localises to the cytoplasm. It catalyses the reaction GTP + H2O = GDP + phosphate + H(+). GTP hydrolase that promotes the GTP-dependent binding of aminoacyl-tRNA to the A-site of ribosomes during protein biosynthesis. The protein is Elongation factor Tu of Lactobacillus helveticus (strain DPC 4571).